The following is a 95-amino-acid chain: MSVLTFLKPRGSGSVARERLQLILAHERVENGRPDLIITLREEILNVIAKHVTVERDKVQIKLERGEGVSTLGVDIEFPVDAVIKPKAKTKRAIA.

The protein belongs to the MinE family.

Prevents the cell division inhibition by proteins MinC and MinD at internal division sites while permitting inhibition at polar sites. This ensures cell division at the proper site by restricting the formation of a division septum at the midpoint of the long axis of the cell. The sequence is that of Cell division topological specificity factor from Methylorubrum extorquens (strain PA1) (Methylobacterium extorquens).